The sequence spans 185 residues: Elongation factor P (185 aa).

It belongs to the elongation factor P family.

It localises to the cytoplasm. Its pathway is protein biosynthesis; polypeptide chain elongation. Its function is as follows. Involved in peptide bond synthesis. Stimulates efficient translation and peptide-bond synthesis on native or reconstituted 70S ribosomes in vitro. Probably functions indirectly by altering the affinity of the ribosome for aminoacyl-tRNA, thus increasing their reactivity as acceptors for peptidyl transferase. This Pelotomaculum thermopropionicum (strain DSM 13744 / JCM 10971 / SI) protein is Elongation factor P.